Consider the following 443-residue polypeptide: D(2) dopamine receptor (443 aa).

Residues 1 to 37 are Extracellular-facing; that stretch reads MDPLNLSWYDDDLESQNWSRPFNGSEGKPGKPHYNYY. N-linked (GlcNAc...) asparagine glycans are attached at residues asparagine 5, asparagine 17, and asparagine 23. A helical membrane pass occupies residues 38–60; it reads AMLLTLLIFIIVFGNVLVCMAVS. Topologically, residues 61-70 are cytoplasmic; it reads REKALQTTTN. The helical transmembrane segment at 71-93 threads the bilayer; sequence YLIVSLAVADLLVATLVMPWVVY. The Extracellular segment spans residues 94-108; it reads LEVVGEWKFSRIHCD. Cysteine 107 and cysteine 182 are joined by a disulfide. Residues 109–130 traverse the membrane as a helical segment; sequence IFVTLDVMMCTASILNLCAISI. Over 131–151 the chain is Cytoplasmic; it reads DRYTAVAMPMLYNTRYSSKRR. Residues 152 to 172 traverse the membrane as a helical segment; that stretch reads VTVMIAIVWVLSFTISCPLLF. Residues 173–188 are Extracellular-facing; the sequence is GLNNTDQNECIIANPA. A helical membrane pass occupies residues 189 to 213; that stretch reads FVVYSSIVSFYVPFIVTLLVYIKIY. The interval 211–373 is interaction with PPP1R9B; the sequence is KIYIVLRRRR…SQQKEKKATQ (163 aa). Topologically, residues 214–373 are cytoplasmic; that stretch reads IVLRRRRKRV…SQQKEKKATQ (160 aa). The tract at residues 282-332 is disordered; that stretch reads EMLSSTSPPERTRYSPIPPSHHQLTLPDPSHHGLHSTADSPAKPEKNGHAK. Basic and acidic residues predominate over residues 323–332; that stretch reads AKPEKNGHAK. A helical transmembrane segment spans residues 374 to 395; the sequence is MLAIVLGVFIICWLPFFITHIL. Residues 396–409 lie on the Extracellular side of the membrane; the sequence is NIHCECNIPPVLYS. A disulfide bridge links cysteine 399 with cysteine 401. Residues 410–431 form a helical membrane-spanning segment; that stretch reads AFTWLGYVNSAVNPIIYTTFNI. Residues 432–443 are Cytoplasmic-facing; that stretch reads EFRKAFLKILHC. The S-palmitoyl cysteine moiety is linked to residue cysteine 443.

The protein belongs to the G-protein coupled receptor 1 family. As to quaternary structure, forms homo- and heterooligomers with DRD4. The interaction with DRD4 may modulate agonist-induced downstream signaling. Interacts with CADPS and CADPS2. Interacts with GPRASP1, PPP1R9B and CLIC6. Interacts with ARRB2. Interacts with HTR2A. Interacts with DRD1. Interacts with KCNA2. Palmitoylated. Palmitoylation which is required for proper localization to the plasma membrane and stability of the receptor could be carried on by ZDHHC4, ZDHHC3 and ZDHHC8.

The protein localises to the cell membrane. Its subcellular location is the golgi apparatus membrane. Functionally, dopamine receptor whose activity is mediated by G proteins which inhibit adenylyl cyclase. Positively regulates postnatal regression of retinal hyaloid vessels via suppression of VEGFR2/KDR activity, downstream of OPN5. The chain is D(2) dopamine receptor (DRD2) from Canis lupus familiaris (Dog).